The sequence spans 285 residues: MFLLTPVLVAVVCILVVWVFKNADRNLEKKKEEAQVQPWVDEDLKDSTEDLQVEEDAEEWQEAEESVEHIPFSHTRYPEQEMRMRSQEFYELLNKRRSVRFISSEHVPMEVIENVIKAAGTAPSGAHTEPWTFVVVKDPDMKHKIREIIEEEEEINYMKRMGKRWVTDLKKLRTNWIKEYLDTAPVLILIFKQVHGFAANGKKKVHYYNEISVSIACGLLLAALQNAGLVTVTTTPLNCGPRLRVLLGRPSHEKLLVLLPVGYPSRDATVPDLKRKALDQIMVTV.

A helical transmembrane segment spans residues 1 to 21 (MFLLTPVLVAVVCILVVWVFK). Residues 96-100 (RRSVR) and 124-125 (SG) each bind FMN. Residues A126, E153, Y157, and K178 each contribute to the 3,5-diiodo-L-tyrosine site. Residues A126, E153, Y157, and K178 each coordinate 3-iodo-L-tyrosine. FMN contacts are provided by residues 233–235 (TTT) and R275.

This sequence belongs to the nitroreductase family. As to quaternary structure, homodimer. Requires FMN as cofactor.

It localises to the cell membrane. The protein resides in the cytoplasmic vesicle membrane. The catalysed reaction is 2 iodide + L-tyrosine + 2 NADP(+) = 3,5-diiodo-L-tyrosine + 2 NADPH + H(+). It carries out the reaction iodide + L-tyrosine + NADP(+) = 3-iodo-L-tyrosine + NADPH. The enzyme catalyses 3-iodo-L-tyrosine + iodide + NADP(+) = 3,5-diiodo-L-tyrosine + NADPH + H(+). It catalyses the reaction L-tyrosine + chloride + NADP(+) = 3-chloro-L-tyrosine + NADPH. The catalysed reaction is bromide + L-tyrosine + NADP(+) = 3-bromo-L-tyrosine + NADPH. Its function is as follows. Catalyzes the dehalogenation of halotyrosines such as 3-bromo-L-tyrosine, 3-chloro-L-tyrosine, 3-iodo-L-tyrosine and 3,5-diiodo-L-tyrosine. During thyroid hormone biosynthesis, facilitates iodide salvage by catalysing the oxidative NADPH-dependent deiodination of the halogenated by-products of thyroid hormone production, monoiodotyrosine (L-MIT) and diiodotyrosine (L-DIT). The scavanged iodide can then reenter the hormone-producing pathways. Acts more efficiently on 3-iodo-L-tyrosine than 3,5-diiodo-L-tyrosine. This Mus musculus (Mouse) protein is Iodotyrosine deiodinase 1 (Iyd).